A 290-amino-acid polypeptide reads, in one-letter code: Agmatinase (290 aa).

Residues His-112, Asp-135, His-137, Asp-139, Asp-216, and Asp-218 each coordinate Mn(2+).

This sequence belongs to the arginase family. Agmatinase subfamily. Mn(2+) serves as cofactor.

The enzyme catalyses agmatine + H2O = urea + putrescine. It participates in amine and polyamine biosynthesis; putrescine biosynthesis via agmatine pathway; putrescine from agmatine: step 1/1. Catalyzes the formation of putrescine from agmatine. The protein is Agmatinase (speB) of Bacillus cereus (strain ATCC 14579 / DSM 31 / CCUG 7414 / JCM 2152 / NBRC 15305 / NCIMB 9373 / NCTC 2599 / NRRL B-3711).